Here is a 504-residue protein sequence, read N- to C-terminus: Anaerobic nitric oxide reductase transcription regulator NorR (504 aa).

The residue at position 57 (Asp57) is a 4-aspartylphosphate. The region spanning 187–416 is the Sigma-54 factor interaction domain; sequence MIGLSPGMTQ…LEHAIHRAVV (230 aa). ATP is bound by residues 215-222 and 278-287; these read GETGTGKE and ADNGTLFLDE. Residues 479–498 constitute a DNA-binding region (H-T-H motif); it reads WAACARMLETDVANLHRLAK.

It participates in nitrogen metabolism; nitric oxide reduction. In terms of biological role, required for the expression of anaerobic nitric oxide (NO) reductase, acts as a transcriptional activator for at least the norVW operon. Activation also requires sigma-54. The protein is Anaerobic nitric oxide reductase transcription regulator NorR of Shigella sonnei (strain Ss046).